The chain runs to 407 residues: Serine/threonine transporter SstT (407 aa).

9 helical membrane-spanning segments follow: residues 10-30 (AKGNLIIQICAGIALGILIGI), 42-62 (LGILFTSALKAIAPMLVFILI), 81-101 (IIILYIVGTFLASACAILANF), 141-161 (ALSSGNYLGILTWAIAGGAAL), 179-199 (VLKIVKFVVKLAPFGIFGLVA), 218-238 (ILLVATMLFVTFVINALIVFF), 245-267 (FPLIFICLRHSAFFAFFTRSSAA), 288-308 (ISIPLGATINMAGAAVTIAIL), and 316-336 (VGIEISLLQAFLLSIIATFAA).

Belongs to the dicarboxylate/amino acid:cation symporter (DAACS) (TC 2.A.23) family.

The protein localises to the cell inner membrane. The catalysed reaction is L-serine(in) + Na(+)(in) = L-serine(out) + Na(+)(out). It catalyses the reaction L-threonine(in) + Na(+)(in) = L-threonine(out) + Na(+)(out). Its function is as follows. Involved in the import of serine and threonine into the cell, with the concomitant import of sodium (symport system). This chain is Serine/threonine transporter SstT, found in Campylobacter jejuni subsp. doylei (strain ATCC BAA-1458 / RM4099 / 269.97).